A 436-amino-acid polypeptide reads, in one-letter code: Small ribosomal subunit protein uS5m (436 aa).

Residues 152 to 218 enclose the S5 DRBM domain; sequence FETYCLEVKR…GMASRKLFHV (67 aa). Residues 417-436 form a disordered region; that stretch reads GVEPMPLGIGLSHVVPKKDD.

This sequence belongs to the universal ribosomal protein uS5 family. As to quaternary structure, component of the mitochondrial ribosome small subunit (28S) which comprises a 12S rRNA and about 30 distinct proteins.

It localises to the mitochondrion. This chain is Small ribosomal subunit protein uS5m (mrps-5), found in Caenorhabditis elegans.